Here is a 363-residue protein sequence, read N- to C-terminus: Protein-arginine kinase (363 aa).

Positions 24–254 (IVLSSRIRLA…AQLIEQERSA (231 aa)) constitute a Phosphagen kinase C-terminal domain. Residues 27-31 (SSRIR), His-92, Arg-125, 176-180 (RASVM), and 207-212 (RGIYGE) contribute to the ATP site. Residues 337 to 342 (RDIKRA) carry the RDXXRA motif of the pArg binding pocket involved in allosteric regulation motif.

Belongs to the ATP:guanido phosphotransferase family.

It carries out the reaction L-arginyl-[protein] + ATP = N(omega)-phospho-L-arginyl-[protein] + ADP + H(+). With respect to regulation, appears to be allosterically activated by the binding of pArg-containing polypeptides to the pArg-binding pocket localized in the C-terminal domain of McsB. In terms of biological role, catalyzes the specific phosphorylation of arginine residues in a large number of proteins. Is part of the bacterial stress response system. Protein arginine phosphorylation has a physiologically important role and is involved in the regulation of many critical cellular processes, such as protein homeostasis, motility, competence, and stringent and stress responses, by regulating gene expression and protein activity. In Bacillus pumilus (strain SAFR-032), this protein is Protein-arginine kinase.